The following is a 497-amino-acid chain: MSSLTDKTRNGALKRNLLRQMLKASVFKFGEFQLKSGQISPIYIDLRECFGHPGLLMLISEAISKQVEISEVQYAGVLGIPYAALPYASVAAGNYLKKPLLIVRKEAKSYGTKKLIEGLYQPNDRLILIEDVVTTGGSILDVVKVLHTENLVASDVFCILDREQGGRQKLQDAGVTLHSLLDMQTVLTFLYSTGAIGDEQWHGIVQALNLPYTSPTKLEINSELENLSSLPYVENVRTPLAERESLTESALIKKILGIMRRKKSNLCLAVDYTTVEQCLQMIELAGPFVLAIKLHADAITDFNEEFTRKLTTMANDMDFIIFEDRKFGDTGNTNLLQLTGAQKIANWADVVTVHAVQGSDSIAGVFRKLAKDPTYRLSGVLLIAQLSTKGSLTALEGYTETAVKIANENRDVISGFITQTRVSACSDLLNWTPGVNLDAKSDSAGQQWRGVDEAIEVQQNDIIIVGRGVTSSSEPVQQLKRYRQIAWDALTRSDDSI.

The OPRTase stretch occupies residues 8–226 (TRNGALKRNL…KLEINSELEN (219 aa)). Positions 227 to 232 (LSSLPY) are domain linker. Residues 233-496 (VENVRTPLAE…WDALTRSDDS (264 aa)) are OMPdecase. Residues Asp271 and 293–295 (KLH) contribute to the UMP site. Lys293 provides a ligand contact to orotidine 5'-phosphate. Residues Asp324, Lys326, and Asp329 each act as for OMPdecase activity in the active site. Orotidine 5'-phosphate is bound by residues Lys326, Asp329, Thr333, Ser387, 446–448 (QQW), and 466–467 (GR). UMP contacts are provided by residues Asp329, Thr333, Ser387, 446–448 (QQW), and 466–467 (GR).

In the N-terminal section; belongs to the purine/pyrimidine phosphoribosyltransferase family. It in the C-terminal section; belongs to the OMP decarboxylase family. As to expression, expressed in intestine and in neurons near the nerve ring and rectum.

It localises to the cytoplasm. It carries out the reaction orotidine 5'-phosphate + diphosphate = orotate + 5-phospho-alpha-D-ribose 1-diphosphate. The enzyme catalyses orotidine 5'-phosphate + H(+) = UMP + CO2. The protein operates within pyrimidine metabolism; UMP biosynthesis via de novo pathway; UMP from orotate: step 1/2. Its pathway is pyrimidine metabolism; UMP biosynthesis via de novo pathway; UMP from orotate: step 2/2. Bifunctional enzyme which catalyzes the formation of UMP from orotate in the de novo pathway of pyrimidine biosynthesis. May also form UMP from uracil. Regulates the size of gut granules during embryonic development. Involved in resistance to DNA damaging agents including UV-C and X-ray radiation. This is Uridine 5'-monophosphate synthase from Caenorhabditis elegans.